An 80-amino-acid chain; its full sequence is U6-ctenitoxin-Pn1a (80 aa).

Residues 1-21 form the signal peptide; the sequence is MWLKIQVFVLALALITLGIQA. Residues 22–37 constitute a propeptide that is removed on maturation; it reads EPNSGPNNPLIQEEAR. 4 cysteine pairs are disulfide-bonded: Cys-39–Cys-54, Cys-46–Cys-59, Cys-53–Cys-69, and Cys-61–Cys-67. The propeptide occupies 72-80; sequence TLGDLFGRR.

This sequence belongs to the neurotoxin 02 (plectoxin) family. 01 (Tx3) subfamily. Expressed by the venom gland.

It is found in the secreted. Antagonist of L-type calcium channels (Cav1/CACNA1). The chain is U6-ctenitoxin-Pn1a from Phoneutria nigriventer (Brazilian armed spider).